Consider the following 168-residue polypeptide: MEAAKKQSVTNQLLAVKSASGKTFSQLAAETGLTNVYVAQLLRRQAQLKPDTVPKLKEALPALTDELIGDMMSPPWRSYDPNLIQEPTIYRLNEAVMHFGESIKEIINEDFGDGIMSAIDFYCSVDKIKGVDGNNRVVVTLDGKYLSHSEQRTENMVSRLNLKGGTSE.

Catalysis depends on residues R91, E94, and S117.

The protein belongs to the cyanase family.

The catalysed reaction is cyanate + hydrogencarbonate + 3 H(+) = NH4(+) + 2 CO2. Its function is as follows. Catalyzes the reaction of cyanate with bicarbonate to produce ammonia and carbon dioxide. The polypeptide is Cyanate hydratase (Arabidopsis thaliana (Mouse-ear cress)).